A 131-amino-acid chain; its full sequence is Phosphoribosyl-AMP cyclohydrolase (131 aa).

Asp89 serves as a coordination point for Mg(2+). Cys90 contacts Zn(2+). Positions 91 and 93 each coordinate Mg(2+). Cys106 and Cys113 together coordinate Zn(2+).

This sequence belongs to the PRA-CH family. As to quaternary structure, homodimer. The cofactor is Mg(2+). Zn(2+) is required as a cofactor.

Its subcellular location is the cytoplasm. The enzyme catalyses 1-(5-phospho-beta-D-ribosyl)-5'-AMP + H2O = 1-(5-phospho-beta-D-ribosyl)-5-[(5-phospho-beta-D-ribosylamino)methylideneamino]imidazole-4-carboxamide. It participates in amino-acid biosynthesis; L-histidine biosynthesis; L-histidine from 5-phospho-alpha-D-ribose 1-diphosphate: step 3/9. Functionally, catalyzes the hydrolysis of the adenine ring of phosphoribosyl-AMP. This Bifidobacterium longum (strain DJO10A) protein is Phosphoribosyl-AMP cyclohydrolase.